Here is a 444-residue protein sequence, read N- to C-terminus: 23S rRNA (uracil(1939)-C(5))-methyltransferase RlmD (444 aa).

In terms of domain architecture, TRAM spans 5-67 (RSRIDRTPFQ…RHFDEARTVE (63 aa)). Cys80, Cys86, Cys89, and Cys168 together coordinate [4Fe-4S] cluster. The S-adenosyl-L-methionine site is built by Gln276, Phe305, Asn310, Glu326, Asp353, and Asp374. Catalysis depends on Cys400, which acts as the Nucleophile.

Belongs to the class I-like SAM-binding methyltransferase superfamily. RNA M5U methyltransferase family. RlmD subfamily.

It carries out the reaction uridine(1939) in 23S rRNA + S-adenosyl-L-methionine = 5-methyluridine(1939) in 23S rRNA + S-adenosyl-L-homocysteine + H(+). Its function is as follows. Catalyzes the formation of 5-methyl-uridine at position 1939 (m5U1939) in 23S rRNA. In Stenotrophomonas maltophilia (strain R551-3), this protein is 23S rRNA (uracil(1939)-C(5))-methyltransferase RlmD.